Consider the following 332-residue polypeptide: L-lactate dehydrogenase A chain (332 aa).

Residues 29–57 and Arg99 each bind NAD(+); that span reads GAVG…VEDK. Residues Arg106, Asn138, and Arg169 each contribute to the substrate site. Asn138 serves as a coordination point for NAD(+). Catalysis depends on His193, which acts as the Proton acceptor. Substrate is bound at residue Thr248.

It belongs to the LDH/MDH superfamily. LDH family. In terms of assembly, homotetramer.

The protein resides in the cytoplasm. The catalysed reaction is (S)-lactate + NAD(+) = pyruvate + NADH + H(+). Its pathway is fermentation; pyruvate fermentation to lactate; (S)-lactate from pyruvate: step 1/1. Interconverts simultaneously and stereospecifically pyruvate and lactate with concomitant interconversion of NADH and NAD(+). The sequence is that of L-lactate dehydrogenase A chain (LDHA) from Columba livia (Rock dove).